Reading from the N-terminus, the 367-residue chain is 2-aminoethylphosphonate--pyruvate transaminase (367 aa).

Lys-194 carries the post-translational modification N6-(pyridoxal phosphate)lysine.

This sequence belongs to the class-V pyridoxal-phosphate-dependent aminotransferase family. PhnW subfamily. In terms of assembly, homodimer. Pyridoxal 5'-phosphate is required as a cofactor.

The catalysed reaction is (2-aminoethyl)phosphonate + pyruvate = phosphonoacetaldehyde + L-alanine. Functionally, involved in phosphonate degradation. The protein is 2-aminoethylphosphonate--pyruvate transaminase of Salmonella schwarzengrund (strain CVM19633).